The following is a 101-amino-acid chain: Large ribosomal subunit protein P1 (101 aa).

Residues 65–89 are disordered; sequence AAPAAAPAEEPKEEKKEEKKEEDTT. The span at 73 to 87 shows a compositional bias: basic and acidic residues; the sequence is EEPKEEKKEEKKEED.

This sequence belongs to the eukaryotic ribosomal protein P1/P2 family. As to quaternary structure, part of the 50S ribosomal subunit. Homodimer, it forms part of the ribosomal stalk which helps the ribosome interact with GTP-bound translation factors. Forms a heptameric uL10/P0(P1)2(P1)2(P1)2 complex, where uL10/P0 forms an elongated spine to which the P1 dimers bind in a sequential fashion.

In terms of biological role, forms part of the ribosomal stalk, playing a central role in the interaction of the ribosome with GTP-bound translation factors. The polypeptide is Large ribosomal subunit protein P1 (Methanothermococcus thermolithotrophicus (Methanococcus thermolithotrophicus)).